Reading from the N-terminus, the 198-residue chain is uncharacterized protein (198 aa).

It to A.aeolicus aq_1211 and aq_1583.

This is an uncharacterized protein from Aquifex aeolicus (strain VF5).